The primary structure comprises 860 residues: Leucine--tRNA ligase (860 aa).

Positions 42–52 (PYPSGRLHMGH) match the 'HIGH' region motif. Positions 619–623 (KMSKS) match the 'KMSKS' region motif. K622 provides a ligand contact to ATP.

The protein belongs to the class-I aminoacyl-tRNA synthetase family.

Its subcellular location is the cytoplasm. It catalyses the reaction tRNA(Leu) + L-leucine + ATP = L-leucyl-tRNA(Leu) + AMP + diphosphate. This is Leucine--tRNA ligase from Shigella boydii serotype 18 (strain CDC 3083-94 / BS512).